Here is a 435-residue protein sequence, read N- to C-terminus: MADSLIEHWPDELSGLFAFEVGFSGGLDSVALLSLLCEARARRPEIGLSAVHVHHGLSPNADAWAAHCQALCDSLRVPLRIERVHVRAGGGESVEAAAREARYQVYRRSASEVIALAHHQDDQAETILLQLLRGGGARALAAMPALRELAPGKLLWRPLLEIPRERLEAYVKARGFAWVDDESNLDTRYRRNLLRHDILPRLERALPHYRSHLARAAMLQADAAAILDEVAREDLQACRTENGLDCGSVLALSAPRRRQTLLAWLDALGWPAPEPGALLEFLRQAEYAERGASPVLRLRQGCLLRFADTLQAWPKAQSEPPASTALLWRGGDAQSLSEWGGELAWERRDAGVPAALLESGAYLAPRRGGEKLSARVGRREVKDLLREAGVPPLLRRRWPLLYGADGELLAVPGIAVSYRAAADGGWWPLWRPARP.

24 to 29 provides a ligand contact to ATP; sequence SGGLDS.

This sequence belongs to the tRNA(Ile)-lysidine synthase family.

It localises to the cytoplasm. The enzyme catalyses cytidine(34) in tRNA(Ile2) + L-lysine + ATP = lysidine(34) in tRNA(Ile2) + AMP + diphosphate + H(+). Functionally, ligates lysine onto the cytidine present at position 34 of the AUA codon-specific tRNA(Ile) that contains the anticodon CAU, in an ATP-dependent manner. Cytidine is converted to lysidine, thus changing the amino acid specificity of the tRNA from methionine to isoleucine. This chain is tRNA(Ile)-lysidine synthase, found in Chromobacterium violaceum (strain ATCC 12472 / DSM 30191 / JCM 1249 / CCUG 213 / NBRC 12614 / NCIMB 9131 / NCTC 9757 / MK).